A 473-amino-acid chain; its full sequence is MSSIKKTLAFSLGTFFSRITGLVRDIILAKTFGASSTLDAYYVSIVFPFFLRRTFAEGAMSSAFMAIYKKLKNKEEKAQFTSAVLTSLGLVTLLIVFLSEVFPYFMASIFATGADEEVKSLAADLIRLTAPFITIVFVWAVFYSVHNASHRYFLPALTPMFSNVGVIVGCLFGDVRWAAAGFTIGGLAALLVLLPFGKFRYRPTFKGLGEFYRLFFGTFMTMAVSQVTTLIDVNVASFLDPGSLSLIQLSSRLYQLPLGIFGVAVSTVALSTLSESEGDFHENLKDFISKSLFLTLPSSIGLMALSERIISLLFGYGAFTHEDVKKSAQILFMYAIGLCFVSLFNLLSRAYHASKEVKTPFFATLLVSAVNISLDVILGFTMGASGIALATSVSYIAGFVFLTLRMKPSFDKKIFKISLASAVMGTVILLLRGSFKGNLGTIFLVLIGVFVYVLFSKLLKIEELEEILRRGSH.

13 consecutive transmembrane segments (helical) span residues Thr-31–Leu-51, Leu-90–Phe-110, Leu-125–Val-145, Phe-153–Gly-173, Trp-177–Gly-197, Phe-215–Val-235, Leu-253–Leu-273, Ile-300–Thr-320, Ser-327–Leu-347, Pro-360–Phe-380, Met-382–Leu-402, Ile-414–Ser-434, and Leu-439–Leu-459.

The protein belongs to the MurJ/MviN family.

It is found in the cell inner membrane. It functions in the pathway cell wall biogenesis; peptidoglycan biosynthesis. Its function is as follows. Involved in peptidoglycan biosynthesis. Transports lipid-linked peptidoglycan precursors from the inner to the outer leaflet of the cytoplasmic membrane. This is Probable lipid II flippase MurJ from Thermotoga maritima (strain ATCC 43589 / DSM 3109 / JCM 10099 / NBRC 100826 / MSB8).